The sequence spans 195 residues: Nucleoid occlusion factor SlmA (195 aa).

The HTH tetR-type domain maps to 7-67 (TNRRAQILQA…GLIEFIEETL (61 aa)). The H-T-H motif DNA-binding region spans 30–49 (TTAKLAEKVGVSEAALYRHF). Residues 109–141 (DALMGEQDRLRARIAKLFERLETQLKQVLRERK) adopt a coiled-coil conformation.

The protein belongs to the nucleoid occlusion factor SlmA family. Homodimer. Interacts with FtsZ.

Its subcellular location is the cytoplasm. The protein localises to the nucleoid. Required for nucleoid occlusion (NO) phenomenon, which prevents Z-ring formation and cell division over the nucleoid. Acts as a DNA-associated cell division inhibitor that binds simultaneously chromosomal DNA and FtsZ, and disrupts the assembly of FtsZ polymers. SlmA-DNA-binding sequences (SBS) are dispersed on non-Ter regions of the chromosome, preventing FtsZ polymerization at these regions. The sequence is that of Nucleoid occlusion factor SlmA from Alteromonas mediterranea (strain DSM 17117 / CIP 110805 / LMG 28347 / Deep ecotype).